The following is a 198-amino-acid chain: Na(+)-translocating NADH-quinone reductase subunit E (198 aa).

The next 6 helical transmembrane spans lie at 11-31, 35-55, 77-97, 110-130, 140-160, and 176-196; these read SVFI…FLAV, VSTA…AVPV, FLNF…LEMV, GIFL…SFMV, VVYG…LAGI, and LGIT…FSGI.

This sequence belongs to the NqrDE/RnfAE family. As to quaternary structure, composed of six subunits; NqrA, NqrB, NqrC, NqrD, NqrE and NqrF.

Its subcellular location is the cell inner membrane. It catalyses the reaction a ubiquinone + n Na(+)(in) + NADH + H(+) = a ubiquinol + n Na(+)(out) + NAD(+). Its function is as follows. NQR complex catalyzes the reduction of ubiquinone-1 to ubiquinol by two successive reactions, coupled with the transport of Na(+) ions from the cytoplasm to the periplasm. NqrA to NqrE are probably involved in the second step, the conversion of ubisemiquinone to ubiquinol. In Pasteurella multocida (strain Pm70), this protein is Na(+)-translocating NADH-quinone reductase subunit E.